The chain runs to 402 residues: Arginine deiminase (402 aa).

The Amidino-cysteine intermediate role is filled by Cys392.

It belongs to the arginine deiminase family.

Its subcellular location is the cytoplasm. The enzyme catalyses L-arginine + H2O = L-citrulline + NH4(+). It functions in the pathway amino-acid degradation; L-arginine degradation via ADI pathway; carbamoyl phosphate from L-arginine: step 1/2. In Mycobacterium bovis (strain ATCC BAA-935 / AF2122/97), this protein is Arginine deiminase (arcA).